The primary structure comprises 223 residues: Deoxyribose-phosphate aldolase (223 aa).

Asp89 functions as the Proton donor/acceptor in the catalytic mechanism. Residue Lys152 is the Schiff-base intermediate with acetaldehyde of the active site. The Proton donor/acceptor role is filled by Lys181.

This sequence belongs to the DeoC/FbaB aldolase family. DeoC type 1 subfamily.

It is found in the cytoplasm. It catalyses the reaction 2-deoxy-D-ribose 5-phosphate = D-glyceraldehyde 3-phosphate + acetaldehyde. It participates in carbohydrate degradation; 2-deoxy-D-ribose 1-phosphate degradation; D-glyceraldehyde 3-phosphate and acetaldehyde from 2-deoxy-alpha-D-ribose 1-phosphate: step 2/2. Its function is as follows. Catalyzes a reversible aldol reaction between acetaldehyde and D-glyceraldehyde 3-phosphate to generate 2-deoxy-D-ribose 5-phosphate. The chain is Deoxyribose-phosphate aldolase from Bacillus cereus (strain AH187).